We begin with the raw amino-acid sequence, 505 residues long: Adenylosuccinate synthetase, chloroplastic (505 aa).

Residues 1-60 constitute a chloroplast transit peptide; that stretch reads MTTMNISTLRLDSNPITTSTKSTTHRSGALGYNGSYSCRLLQFQKKNKAPSIIVCSTKPL. GTP-binding positions include 92-98 and 120-122; these read GDEGKGK and GHT. The active-site Proton acceptor is Asp93. Residues Asp93 and Gly120 each coordinate Mg(2+). IMP is bound by residues 93–96, 118–121, Thr210, Arg224, Gln304, Thr319, and Arg383; these read DEGK and NAGH. Catalysis depends on His121, which acts as the Proton donor. Substrate is bound at residue 379 to 385; sequence TTTGRPR. Residues Arg385, 411–413, and 494–496 each bind GTP; these read KLD and GVG.

This sequence belongs to the adenylosuccinate synthetase family. In terms of assembly, homodimer. The cofactor is Mg(2+).

It is found in the plastid. The protein localises to the chloroplast. It carries out the reaction IMP + L-aspartate + GTP = N(6)-(1,2-dicarboxyethyl)-AMP + GDP + phosphate + 2 H(+). The protein operates within purine metabolism; AMP biosynthesis via de novo pathway; AMP from IMP: step 1/2. Plays an important role in the de novo pathway and in the salvage pathway of purine nucleotide biosynthesis. Catalyzes the first committed step in the biosynthesis of AMP from IMP. The polypeptide is Adenylosuccinate synthetase, chloroplastic (Nicotiana tabacum (Common tobacco)).